The primary structure comprises 429 residues: Serine--tRNA ligase (429 aa).

235–237 (TAE) lines the L-serine pocket. 266–268 (RSE) is an ATP binding site. L-serine is bound at residue Glu289. Residue 353–356 (EISS) participates in ATP binding. Ser389 serves as a coordination point for L-serine.

It belongs to the class-II aminoacyl-tRNA synthetase family. Type-1 seryl-tRNA synthetase subfamily. As to quaternary structure, homodimer. The tRNA molecule binds across the dimer.

The protein resides in the cytoplasm. It carries out the reaction tRNA(Ser) + L-serine + ATP = L-seryl-tRNA(Ser) + AMP + diphosphate + H(+). The catalysed reaction is tRNA(Sec) + L-serine + ATP = L-seryl-tRNA(Sec) + AMP + diphosphate + H(+). It functions in the pathway aminoacyl-tRNA biosynthesis; selenocysteinyl-tRNA(Sec) biosynthesis; L-seryl-tRNA(Sec) from L-serine and tRNA(Sec): step 1/1. Its function is as follows. Catalyzes the attachment of serine to tRNA(Ser). Is also able to aminoacylate tRNA(Sec) with serine, to form the misacylated tRNA L-seryl-tRNA(Sec), which will be further converted into selenocysteinyl-tRNA(Sec). This Haemophilus influenzae (strain 86-028NP) protein is Serine--tRNA ligase.